The primary structure comprises 125 residues: Small ribosomal subunit protein uS11 (125 aa).

The tract at residues K101–K125 is disordered. A compositionally biased stretch (basic residues) spans P116–K125.

This sequence belongs to the universal ribosomal protein uS11 family. In terms of assembly, part of the 30S ribosomal subunit. Interacts with proteins S7 and S18. Binds to IF-3.

Located on the platform of the 30S subunit, it bridges several disparate RNA helices of the 16S rRNA. Forms part of the Shine-Dalgarno cleft in the 70S ribosome. This is Small ribosomal subunit protein uS11 from Mycoplasma sp.